Consider the following 398-residue polypeptide: MASNDKGLEEIPEGQIETNYDEVTDSFDSMDLKPELLRGVYAYGFERPSAIQQRAIKPIIAGHDVIAQAQSGTGKTATFSISALQKIDQELKACQALIVAPTRELAQQIQKVVVAIGDFMNIECHACIGGTNVRDDMNALRAGPQVVVGTPGRIHDMIERRVLKTDQMKLFILDEADEMLSRGFTEQIYDIFQLLPQSTQVTLLSATMPQDVLEVTTKFMRDPIRILVKKQELTLEGIKQFYIAVEKEEWKLDTLSDLYETVTITQAVIFCNTRRKVDWLTDKLTARDFTVSAMHGDMEQGQRDVIMKEFRSGSSRVLIATDLLARGIDVQQVSLVINYDLPANRENYIHRIGRGGRFGRKGVAINFVTADDVRMMREIEQFYSTQIEEMPMNVADLI.

A Q motif motif is present at residues 25-53 (DSFDSMDLKPELLRGVYAYGFERPSAIQQ). Positions 56–226 (IKPIIAGHDV…TKFMRDPIRI (171 aa)) constitute a Helicase ATP-binding domain. An ATP-binding site is contributed by 69–76 (AQSGTGKT). The short motif at 174 to 177 (DEAD) is the DEAD box element. Positions 237-398 (GIKQFYIAVE…EMPMNVADLI (162 aa)) constitute a Helicase C-terminal domain.

This sequence belongs to the DEAD box helicase family. eIF4A subfamily. Component of the eIF4F complex, which composition varies with external and internal environmental conditions. It is composed of at least eIF4A, eIF4E and eIF4G.

The protein resides in the cytoplasm. It catalyses the reaction ATP + H2O = ADP + phosphate + H(+). ATP-dependent RNA helicase which is a subunit of the eIF4F complex involved in cap recognition and is required for mRNA binding to ribosome. In the current model of translation initiation, eIF4A unwinds RNA secondary structures in the 5'-UTR of mRNAs which is necessary to allow efficient binding of the small ribosomal subunit, and subsequent scanning for the initiator codon. In Aspergillus niger (strain ATCC MYA-4892 / CBS 513.88 / FGSC A1513), this protein is ATP-dependent RNA helicase eIF4A (tif1).